The chain runs to 799 residues: Protein phosphatase 1 regulatory subunit 3F (799 aa).

The disordered stretch occupies residues Met1–Ala30. Residues Met1–Gly772 are Cytoplasmic-facing. Over residues Val7–Pro19 the composition is skewed to pro residues. At Ser18 the chain carries Phosphoserine. Residues Ala20–Ala30 show a composition bias toward low complexity. The short motif at Arg36–Phe39 is the PP1-binding motif element. Disordered regions lie at residues Arg53–Ala108, Ser201–Asp235, Arg332–His353, and Ala417–Ala439. The segment covering Ala78–Phe97 has biased composition (acidic residues). A CBM21 domain is found at Leu127–Leu283. The segment covering Arg334–His353 has biased composition (basic and acidic residues). Residue Ser545 is modified to Phosphoserine. 3 disordered regions span residues Lys566 to Ile600, Ser663 to Pro688, and Pro722 to Pro743. Residues Glu569–Asp579 are compositionally biased toward acidic residues. A compositionally biased stretch (low complexity) spans Pro585–Lys594. 2 positions are modified to phosphoserine: Ser587 and Ser592. A compositionally biased stretch (basic and acidic residues) spans Pro679–Pro688. The helical transmembrane segment at Leu773–Leu793 threads the bilayer. At Ser794–Ser799 the chain is on the extracellular side.

In terms of tissue distribution, highly expressed in brain (at protein level).

It is found in the membrane. Functionally, glycogen-targeting subunit for protein phosphatase 1 (PP1). In Mus musculus (Mouse), this protein is Protein phosphatase 1 regulatory subunit 3F (Ppp1r3f).